A 517-amino-acid chain; its full sequence is Shugoshin 1 (517 aa).

Positions 1-89 (MAKERCQKRS…DVILQLRKEC (89 aa)) form a coiled coil. A necessary for interaction with PPP2CA and PPP2R1A region spans residues 1-176 (MAKERCQKRS…DFDSGKVEST (176 aa)). Disordered regions lie at residues 107–136 (QSEETTQNWKGRPSDVVSSIDNTTRDLSGK), 149–173 (PYQTTEPSPAVTPETQGCDFDSGKV), 267–317 (PEQI…TLDG), and 334–427 (HPTP…QESP). Residues 268-291 (EQIESKHKRARKRRAEQRRTKQRC) are a coiled coil. Basic residues predominate over residues 273-302 (KHKRARKRRAEQRRTKQRCKSKSSLRSKGN). The span at 341–363 (KMNNGCNKETDSSNSEVSDLECS) shows a compositional bias: polar residues. Over residues 379–390 (RLRDYRESERAV) the composition is skewed to basic and acidic residues. Ser426 is modified (phosphoserine). The PXVXL/I motif signature appears at 441–445 (PRVKI). The D-box motif lies at 447 to 455 (KPSLPPKRR). A Phosphoserine; by NEK2 modification is found at Ser497.

This sequence belongs to the shugoshin family. As to quaternary structure, interacts with PPP2CA (or PPP2CB), PPP2R1B, PPP2R5A, PPP2R5B, PPP2R5C, PPP2R5D, PPP2R5E, SET, LRRC59, RBM10 (or RBM5), RPL10A, RPL28, RPL7, RPL7A and RPLP1. Interaction with protein phosphatase 2A occurs most probably through direct binding to the regulatory B56 subunits: PPP2R1B, PPP2R5A, PPP2R5B, PPP2R5C, PPP2R5D, PPP2R5E. Interacts with PPP2R1A and NEK2. Interacts with CDCA8. Post-translationally, ubiquitinated and degraded during mitotic exit by APC/C-Cdh1. In terms of processing, phosphorylation by NEK2 is essential for chromosome congression in mitosis and for the proper attachment of spindle microtubule to the kinetochore. Phosphorylated by PLK1 and AUKRB. As to expression, ubiquitously expressed in proliferating cells. Moderately expressed in the oocytes.

The protein resides in the nucleus. Its subcellular location is the chromosome. The protein localises to the centromere. It localises to the kinetochore. It is found in the cytoplasm. The protein resides in the cytoskeleton. Its subcellular location is the spindle pole. The protein localises to the microtubule organizing center. It localises to the centrosome. It is found in the nucleus speckle. Its function is as follows. Plays a central role in chromosome cohesion during mitosis by preventing premature dissociation of cohesin complex from centromeres after prophase, when most of cohesin complex dissociates from chromosomes arms. May act by preventing phosphorylation of the STAG2 subunit of cohesin complex at the centromere, ensuring cohesin persistence at centromere until cohesin cleavage by ESPL1/separase at anaphase. Essential for proper chromosome segregation during mitosis and this function requires interaction with PPP2R1A. Its phosphorylated form is necessary for chromosome congression and for the proper attachment of spindle microtubule to the kinetochore. Necessary for kinetochore localization of PLK1 and CENPF. May play a role in the tension sensing mechanism of the spindle-assembly checkpoint by regulating PLK1 kinetochore affinity. Involved in centromeric enrichment of AUKRB in prometaphase. This chain is Shugoshin 1, found in Mus musculus (Mouse).